Here is a 122-residue protein sequence, read N- to C-terminus: Large ribosomal subunit protein bL12 (122 aa).

This sequence belongs to the bacterial ribosomal protein bL12 family. In terms of assembly, homodimer. Part of the ribosomal stalk of the 50S ribosomal subunit. Forms a multimeric L10(L12)X complex, where L10 forms an elongated spine to which 2 to 4 L12 dimers bind in a sequential fashion. Binds GTP-bound translation factors.

In terms of biological role, forms part of the ribosomal stalk which helps the ribosome interact with GTP-bound translation factors. Is thus essential for accurate translation. The polypeptide is Large ribosomal subunit protein bL12 (Aliivibrio fischeri (strain ATCC 700601 / ES114) (Vibrio fischeri)).